Here is a 235-residue protein sequence, read N- to C-terminus: Ubiquinone biosynthesis O-methyltransferase (235 aa).

Arginine 40, glycine 60, aspartate 81, and methionine 125 together coordinate S-adenosyl-L-methionine.

Belongs to the methyltransferase superfamily. UbiG/COQ3 family.

The enzyme catalyses a 3-demethylubiquinol + S-adenosyl-L-methionine = a ubiquinol + S-adenosyl-L-homocysteine + H(+). It catalyses the reaction a 3-(all-trans-polyprenyl)benzene-1,2-diol + S-adenosyl-L-methionine = a 2-methoxy-6-(all-trans-polyprenyl)phenol + S-adenosyl-L-homocysteine + H(+). Its pathway is cofactor biosynthesis; ubiquinone biosynthesis. O-methyltransferase that catalyzes the 2 O-methylation steps in the ubiquinone biosynthetic pathway. The chain is Ubiquinone biosynthesis O-methyltransferase from Nitrosomonas europaea (strain ATCC 19718 / CIP 103999 / KCTC 2705 / NBRC 14298).